A 130-amino-acid polypeptide reads, in one-letter code: Small ribosomal subunit protein uS9 (130 aa).

This sequence belongs to the universal ribosomal protein uS9 family.

The polypeptide is Small ribosomal subunit protein uS9 (Paracidovorax citrulli (strain AAC00-1) (Acidovorax citrulli)).